We begin with the raw amino-acid sequence, 753 residues long: MSECPVRKSNVGGGGTRNHDWWPAQLRLNILRQHTPVSNPLDKDFDYAAAFKSLDYEGLKKDLTKLMTDSQDWWPADFGHYGGLFIRMAWHSAGTYRVTDGRGGGGEGQQRFAPLNSWPDNVSLDKARRLLWPIKQKYGNKISWSDLLLLTGNVALESMGFKTFGFAGGRPDTWEADESVYWGAETTWLGNEDRYSEGQEGHEGHGVVQGDESKKQHTDIHNRDLQSPLASSHMGLIYVNPEGPDGIPDPVASAKDIRVTFGRMAMNDEETVALIAGGHSFGKTHGAGPTHHVGKEPEAAPIEHQGLGWANSFGQGKGPDTITSGLEVTWTPTPTKWGMGYLEYLYKFDWEPTKSPAGANQWVAKNAEPTIPDAYDPNKKKLPTMLTTDIALRMDPAYDKICRDYLANPDKFADAFARAWFKLLHRDMGPRTRWIGPEVPSEILPWEDYIPPVDYQIIDDNDIAALKKEILATGVAPKKLIFVAWSSASSFRGSDKRGGANGARIRLAPQNEWKVNDPSTLREVLAALESVQQKFNDSSSGKKVSLADLIVLGGVAALEQASGLVVPFTPGRNDATQEHTDVHSFTHLEPHADGFRSYGKGTKRVRTEQFLIDRASLLTLSAPELTALIGGLRVLEANYDGSSYGVLTKTPGKLTNDYFVNLLDTNTAWKAADNEGEVFIGYDRKTHDKKWTATRADLIFGAHAELRALAEVYAAVDGEEKFKRDFVAAWHKVMNLDRFDLKQEGRGQNAPKL.

Residues 90–238 (WHSAGTYRVT…LASSHMGLIY (149 aa)) constitute a cross-link (tryptophyl-tyrosyl-methioninium (Trp-Tyr) (with M-264)). His91 (proton acceptor) is an active-site residue. The interval 196–220 (SEGQEGHEGHGVVQGDESKKQHTDI) is disordered. Residues 238 to 264 (YVNPEGPDGIPDPVASAKDIRVTFGRM) constitute a cross-link (tryptophyl-tyrosyl-methioninium (Tyr-Met) (with W-90)). His279 serves as a coordination point for heme b.

Belongs to the peroxidase family. Peroxidase/catalase subfamily. Homodimer or homotetramer. Heme b is required as a cofactor. Formation of the three residue Trp-Tyr-Met cross-link is important for the catalase, but not the peroxidase activity of the enzyme.

The protein localises to the cytoplasm. The catalysed reaction is H2O2 + AH2 = A + 2 H2O. It carries out the reaction 2 H2O2 = O2 + 2 H2O. With respect to regulation, inhibited by KCN. Functionally, bifunctional enzyme with both catalase and broad-spectrum peroxidase activity. This Neurospora crassa (strain ATCC 24698 / 74-OR23-1A / CBS 708.71 / DSM 1257 / FGSC 987) protein is Catalase-peroxidase.